A 287-amino-acid polypeptide reads, in one-letter code: Large ribosomal subunit protein uL2 (287 aa).

Composition is skewed to basic residues over residues 209–220 (GRNRWKARRPKV) and 258–287 (KTRKKKKQSNKLIVRRRRRSSKRSRGGRQS). The interval 209 to 287 (GRNRWKARRP…SKRSRGGRQS (79 aa)) is disordered.

The protein belongs to the universal ribosomal protein uL2 family. As to quaternary structure, part of the 50S ribosomal subunit. Forms a bridge to the 30S subunit in the 70S ribosome.

One of the primary rRNA binding proteins. Required for association of the 30S and 50S subunits to form the 70S ribosome, for tRNA binding and peptide bond formation. It has been suggested to have peptidyltransferase activity; this is somewhat controversial. Makes several contacts with the 16S rRNA in the 70S ribosome. The chain is Large ribosomal subunit protein uL2 from Acaryochloris marina (strain MBIC 11017).